Reading from the N-terminus, the 655-residue chain is MSEPLIELRDVWREFAAGDQVVAVLREVNLSIQAGEMVAIVGASGSGKSTLMNILGCLDRPSRGGYRVDGRETARMDPDELAELRREHFGFIFQRYHLLADLSAQANVEMPAVYAGMASGPRHERAAALLRRLGLSERLDYRPGQLSGGQQQRVSIARALMNGGRIILADEPTGALDTQTGQEVLRILKELNAAGHTIVLVTHDMSVARHARRIIEISDGRIVSDQARPDAPPLDALAGDEGPEAPRPAPQPLRAWLDRGSEALRMALLAMNAHRLRTCLTMLGIIIGIAAVVSVVALGAGSRQMILDDISAMGTNTVDVLPGKHFGDEKAASIRTLVAADVEALARQPYADSVSPEVTTSATLRYRNVSVNGTVQGVGEQYPRVRGVRIAQGQFFDAAAVARRGQDVVIDNNTRKALFGNHTDPIGQVIFIGAVPARVIGVTRPQETLFGNADALHVWIPYTTALSRILGQQHLRSITVRVNDSTPPKAAEAAITKLMLQRHGTQDFFVFNTDTIRQTVERTTATLTLLVSMIAVISLVVVGIGVMNIMLVSVTERTREIGVRMAVGARRSDIMQQFLIEAVLVCLIGGVLGILLSLSIGVLVSQATRGAFQMLYSSGSMVLAFVCSTLIGVAFGFLPARSAARLDPVESLARE.

Positions 6–244 constitute an ABC transporter domain; it reads IELRDVWREF…DALAGDEGPE (239 aa). 42 to 49 contributes to the ATP binding site; that stretch reads GASGSGKS. The tract at residues 225-252 is disordered; it reads DQARPDAPPLDALAGDEGPEAPRPAPQP. 4 helical membrane-spanning segments follow: residues 280 to 300, 527 to 547, 583 to 603, and 620 to 640; these read LTML…ALGA, LTLL…IGVM, VLVC…IGVL, and SMVL…FLPA.

The protein belongs to the ABC transporter superfamily. Macrolide exporter (TC 3.A.1.122) family. Homodimer.

It is found in the cell inner membrane. Its function is as follows. Non-canonical ABC transporter that contains transmembrane domains (TMD), which form a pore in the inner membrane, and an ATP-binding domain (NBD), which is responsible for energy generation. Confers resistance against macrolides. The polypeptide is Macrolide export ATP-binding/permease protein MacB (Bordetella avium (strain 197N)).